We begin with the raw amino-acid sequence, 391 residues long: Elongation factor Tu (391 aa).

Residues 10–201 (KPHVNIGTIG…QVDAYIPTPV (192 aa)) form the tr-type G domain. Residues 19 to 26 (GHVDHGKT) are G1. Residue 19–26 (GHVDHGKT) coordinates GTP. A Mg(2+)-binding site is contributed by Thr26. The G2 stretch occupies residues 55–59 (GITIS). A G3 region spans residues 76–79 (DCPG). Residues 76–80 (DCPGH) and 131–134 (NKVD) contribute to the GTP site. The interval 131-134 (NKVD) is G4. The segment at 169–171 (SAL) is G5.

This sequence belongs to the TRAFAC class translation factor GTPase superfamily. Classic translation factor GTPase family. EF-Tu/EF-1A subfamily. In terms of assembly, monomer.

The protein localises to the cytoplasm. It catalyses the reaction GTP + H2O = GDP + phosphate + H(+). GTP hydrolase that promotes the GTP-dependent binding of aminoacyl-tRNA to the A-site of ribosomes during protein biosynthesis. This chain is Elongation factor Tu, found in Mesorhizobium japonicum (strain LMG 29417 / CECT 9101 / MAFF 303099) (Mesorhizobium loti (strain MAFF 303099)).